A 171-amino-acid chain; its full sequence is Transcriptional repressor NrdR (171 aa).

A zinc finger spans residues 3–34; it reads CPFCGDPNTQVADTRENEGGEVVRRRRRCPKC. An ATP-cone domain is found at 49–139; the sequence is PHIVKRNGNR…VYRNFADVDE (91 aa). The segment at 148-171 is disordered; it reads KARPKRNRPAEPPEPTSENDLFRS.

The protein belongs to the NrdR family. Requires Zn(2+) as cofactor.

Its function is as follows. Negatively regulates transcription of bacterial ribonucleotide reductase nrd genes and operons by binding to NrdR-boxes. The chain is Transcriptional repressor NrdR from Aromatoleum aromaticum (strain DSM 19018 / LMG 30748 / EbN1) (Azoarcus sp. (strain EbN1)).